The chain runs to 506 residues: Anaerobic nitric oxide reductase transcription regulator NorR (506 aa).

Aspartate 57 is subject to 4-aspartylphosphate. Positions 187-416 (MIGLSPAMTQ…LEHAIHRAVV (230 aa)) constitute a Sigma-54 factor interaction domain. ATP contacts are provided by residues 215–222 (GETGTGKE) and 278–287 (ADNGTLFLDE). A DNA-binding region (H-T-H motif) is located at residues 481 to 500 (WAASARALETDVANLHRLAK).

The protein operates within nitrogen metabolism; nitric oxide reduction. In terms of biological role, required for the expression of anaerobic nitric oxide (NO) reductase, acts as a transcriptional activator for at least the norVW operon. Activation also requires sigma-54. In Salmonella agona (strain SL483), this protein is Anaerobic nitric oxide reductase transcription regulator NorR.